We begin with the raw amino-acid sequence, 289 residues long: MSTIIPSPLAPQPPQQHYVTPPLTVILTVILLVFFFIGFFTLYFCKCFLDTMVQAWRLHHGGDTVSDNPLQQPEAPPVNPGLELRIINSFPTFPYSSVKDLREEKYGLECAICLLEFDGDHVLRLLTTCYHVFHQECIDLWFESHRTCPVCRRDLDPPPPPENTKPTVDEMIIDVIQETSDDEEDDHHRQQTTTQIDTWPSSGQTSSIKKEQNLPEKFSRSHSTGHSIVRNKPEEEDKYTLRLPEHVKIKVTRGHSQTESCVTFAELIRNRGYDHRRFGEVSGQTQSKN.

The chain crosses the membrane as a helical span at residues 25–45 (VILTVILLVFFFIGFFTLYFC). Residues 110–152 (CAICLLEFDGDHVLRLLTTCYHVFHQECIDLWFESHRTCPVCR) form an RING-type; atypical zinc finger. Residues 179–237 (TSDDEEDDHHRQQTTTQIDTWPSSGQTSSIKKEQNLPEKFSRSHSTGHSIVRNKPEEED) are disordered. Polar residues predominate over residues 191–207 (QTTTQIDTWPSSGQTSS). Residues 208–219 (IKKEQNLPEKFS) are compositionally biased toward basic and acidic residues.

Belongs to the RING-type zinc finger family. ATL subfamily.

The protein resides in the membrane. The enzyme catalyses S-ubiquitinyl-[E2 ubiquitin-conjugating enzyme]-L-cysteine + [acceptor protein]-L-lysine = [E2 ubiquitin-conjugating enzyme]-L-cysteine + N(6)-ubiquitinyl-[acceptor protein]-L-lysine.. It functions in the pathway protein modification; protein ubiquitination. The polypeptide is RING-H2 finger protein ATL29 (ATL29) (Arabidopsis thaliana (Mouse-ear cress)).